The primary structure comprises 294 residues: ATP synthase gamma chain (294 aa).

Belongs to the ATPase gamma chain family. In terms of assembly, F-type ATPases have 2 components, CF(1) - the catalytic core - and CF(0) - the membrane proton channel. CF(1) has five subunits: alpha(3), beta(3), gamma(1), delta(1), epsilon(1). CF(0) has three main subunits: a, b and c.

It is found in the cell inner membrane. Its function is as follows. Produces ATP from ADP in the presence of a proton gradient across the membrane. The gamma chain is believed to be important in regulating ATPase activity and the flow of protons through the CF(0) complex. The polypeptide is ATP synthase gamma chain (Paramagnetospirillum magneticum (strain ATCC 700264 / AMB-1) (Magnetospirillum magneticum)).